A 233-amino-acid chain; its full sequence is Coproporphyrinogen-III oxidase 2, chloroplastic (233 aa).

The transit peptide at 1-48 (MASHSSTLFTSPSSFILFSSHRLKSSPNYFTYHFPRSVKRPHFDLRCS) directs the protein to the chloroplast. Residue Ser174 coordinates substrate. His188 functions as the Proton donor in the catalytic mechanism.

Belongs to the aerobic coproporphyrinogen-III oxidase family. Homodimer.

It is found in the plastid. The protein resides in the chloroplast. It catalyses the reaction coproporphyrinogen III + O2 + 2 H(+) = protoporphyrinogen IX + 2 CO2 + 2 H2O. It functions in the pathway porphyrin-containing compound metabolism; protoporphyrin-IX biosynthesis; protoporphyrinogen-IX from coproporphyrinogen-III (O2 route): step 1/1. The protein operates within porphyrin-containing compound metabolism; chlorophyll biosynthesis. Its function is as follows. Key enzyme in heme biosynthesis. Catalyzes the oxidative decarboxylation of propionic acid side chains of rings A and B of coproporphyrinogen III. The protein is Coproporphyrinogen-III oxidase 2, chloroplastic (CPX2) of Arabidopsis thaliana (Mouse-ear cress).